We begin with the raw amino-acid sequence, 167 residues long: NADH-quinone oxidoreductase subunit I 1 (167 aa).

4Fe-4S ferredoxin-type domains follow at residues 58-88 and 98-127; these read LRRYPNGEERCIACKLCEAVCPAQAITIDAE and TRYDIDMTKCIYCGFCQEACPVDAIVEGPN. [4Fe-4S] cluster-binding residues include cysteine 68, cysteine 71, cysteine 74, cysteine 78, cysteine 107, cysteine 110, cysteine 113, and cysteine 117.

The protein belongs to the complex I 23 kDa subunit family. As to quaternary structure, NDH-1 is composed of 14 different subunits. Subunits NuoA, H, J, K, L, M, N constitute the membrane sector of the complex. Requires [4Fe-4S] cluster as cofactor.

It localises to the cell inner membrane. It catalyses the reaction a quinone + NADH + 5 H(+)(in) = a quinol + NAD(+) + 4 H(+)(out). Its function is as follows. NDH-1 shuttles electrons from NADH, via FMN and iron-sulfur (Fe-S) centers, to quinones in the respiratory chain. The immediate electron acceptor for the enzyme in this species is believed to be ubiquinone. Couples the redox reaction to proton translocation (for every two electrons transferred, four hydrogen ions are translocated across the cytoplasmic membrane), and thus conserves the redox energy in a proton gradient. This Cereibacter sphaeroides (strain ATCC 17029 / ATH 2.4.9) (Rhodobacter sphaeroides) protein is NADH-quinone oxidoreductase subunit I 1.